The chain runs to 537 residues: 2-succinyl-5-enolpyruvyl-6-hydroxy-3-cyclohexene-1-carboxylate synthase (537 aa).

It belongs to the TPP enzyme family. MenD subfamily. As to quaternary structure, homodimer. It depends on Mg(2+) as a cofactor. Mn(2+) is required as a cofactor. Thiamine diphosphate serves as cofactor.

It carries out the reaction isochorismate + 2-oxoglutarate + H(+) = 5-enolpyruvoyl-6-hydroxy-2-succinyl-cyclohex-3-ene-1-carboxylate + CO2. It participates in quinol/quinone metabolism; 1,4-dihydroxy-2-naphthoate biosynthesis; 1,4-dihydroxy-2-naphthoate from chorismate: step 2/7. Its pathway is quinol/quinone metabolism; menaquinone biosynthesis. In terms of biological role, catalyzes the thiamine diphosphate-dependent decarboxylation of 2-oxoglutarate and the subsequent addition of the resulting succinic semialdehyde-thiamine pyrophosphate anion to isochorismate to yield 2-succinyl-5-enolpyruvyl-6-hydroxy-3-cyclohexene-1-carboxylate (SEPHCHC). This chain is 2-succinyl-5-enolpyruvyl-6-hydroxy-3-cyclohexene-1-carboxylate synthase, found in Rhodococcus erythropolis (strain PR4 / NBRC 100887).